We begin with the raw amino-acid sequence, 272 residues long: Putative hydro-lyase RPD_1846 (272 aa).

It belongs to the D-glutamate cyclase family.

The sequence is that of Putative hydro-lyase RPD_1846 from Rhodopseudomonas palustris (strain BisB5).